A 2240-amino-acid polypeptide reads, in one-letter code: Death-inducer obliterator 1 (2240 aa).

Methionine 1 carries the N-acetylmethionine modification. Positions 1-25 are enriched in basic and acidic residues; it reads MDDKGDPSNEEAPKAIKPTSKEFRK. The interval 1 to 259 is disordered; that stretch reads MDDKGDPSNE…EPGDLGRPKP (259 aa). Serine 60 and serine 114 each carry phosphoserine. Positions 111-130 are enriched in polar residues; sequence SEGSVESASETRSGPQSAST. The span at 132-146 shows a compositional bias: basic and acidic residues; that stretch reads VKERPASSEKVKGGD. Over residues 147-156 the composition is skewed to acidic residues; sequence DHDDTSDSDS. Residue threonine 151 is modified to Phosphothreonine. Phosphoserine occurs at positions 152 and 154. Short sequence motifs (nuclear localization signal) lie at residues 165-173 and 185-193; these read QNRLRRKRE and QSRLRKKRR. The span at 172–181 shows a compositional bias: basic and acidic residues; it reads REQEPTERPL. The segment covering 230–246 has biased composition (basic and acidic residues); that stretch reads GKDDRESKLEGKAAQDI. Residue lysine 247 forms a Glycyl lysine isopeptide (Lys-Gly) (interchain with G-Cter in SUMO2) linkage. A PHD-type zinc finger spans residues 268 to 322; sequence ALYCICRQPHNNRFMICCDRCEEWFHGDCVGISEARGRLLERNGEDYICPNCTIL. 9 disordered regions span residues 431–456, 501–567, 584–618, 773–826, 860–947, 1013–1045, 1206–1427, 1453–1472, and 1517–2240; these read SGKEQKPKPKEKMKMKPEKPSLPKCG, STPS…RNLV, KKPPSGFKGTIPKRPWLSATPSSGASAARQAGPAP, RPAR…EKST, VPSA…EDLS, LAKPSSSPDPRYLSVPPSPNISTSESRSPPEGD, GELD…VAYD, RRNSVERPAEPVAGAATPSL, and SDAL…ASQA. The segment covering 433-451 has biased composition (basic and acidic residues); sequence KEQKPKPKEKMKMKPEKPS. Residues 501–510 show a composition bias toward polar residues; sequence STPSWASDHN. Position 523 is a phosphoserine (serine 523). Over residues 530-541 the composition is skewed to basic and acidic residues; the sequence is STKEDRRSEEKA. 2 stretches are compositionally biased toward low complexity: residues 542–551 and 604–618; these read AAMAASKKTA and PSSGASAARQAGPAP. Residues 670–790 form the TFIIS central domain; it reads IRQNIRRSLK…SRTKLHNESK (121 aa). The segment covering 773-791 has biased composition (basic and acidic residues); the sequence is RPARSVMESRTKLHNESKK. The segment covering 800–815 has biased composition (acidic residues); that stretch reads PDLEDSPPVSDSEEQQ. A phosphoserine mark is found at serine 805 and serine 809. Basic and acidic residues predominate over residues 878 to 890; it reads VKKEDLKSKHDSS. Residue lysine 879 forms a Glycyl lysine isopeptide (Lys-Gly) (interchain with G-Cter in SUMO2) linkage. Phosphoserine occurs at positions 889 and 898. Positions 930–941 are enriched in pro residues; that stretch reads PGPPGDGHPEPS. A phosphoserine mark is found at serine 1019, serine 1030, and serine 1040. The span at 1207–1220 shows a compositional bias: basic and acidic residues; it reads ELDKMDEKRTRLQP. Position 1244 is a phosphotyrosine (tyrosine 1244). At threonine 1256 the chain carries Phosphothreonine. The span at 1258 to 1271 shows a compositional bias: pro residues; the sequence is PGSPPPPPPLPEPP. 2 positions are modified to phosphoserine: serine 1260 and serine 1312. Positions 1276–1313 are enriched in low complexity; it reads LSSLKPAAPSPATAATTAAAASTAASSTASSASKTASP. Positions 1376–1392 are enriched in acidic residues; the sequence is LEEEEDDRPYDPEEEYD. Over residues 1393 to 1424 the composition is skewed to basic and acidic residues; sequence PERAFDTQLVERGRRHEVERAPEAAAAEREEV. Residue serine 1456 is modified to Phosphoserine. Position 1469 is a phosphothreonine (threonine 1469). Phosphoserine occurs at positions 1522 and 1714. Residues 1771–1782 are compositionally biased toward pro residues; it reads FPGPRGPAPPFP. Arginine 1835 carries the post-translational modification Omega-N-methylarginine. Over residues 1842 to 1856 the composition is skewed to basic and acidic residues; that stretch reads FEERKDPHGEKREFQ. Residues arginine 1893, arginine 1894, arginine 1977, arginine 1982, arginine 1993, arginine 2008, and arginine 2024 each carry the asymmetric dimethylarginine modification. The segment covering 2044–2059 has biased composition (low complexity); that stretch reads AGPPSALSSSAPGQGP. Basic and acidic residues-rich tracts occupy residues 2069 to 2101 and 2109 to 2230; these read DFREGKGHEYRNQTFEGRQRERFDVGPKEKPLE and ASED…EASR.

In terms of assembly, interacts specifically (via PHD-type zinc finger) with histone H3 that is trimethylated at 'Lys-4' (H3K4me3), histone phosphorylation at 'Thr-3' or 'Thr-6' disrupts this binding and promotes translocation of DIDO1 from chromatin to the mitotic spindle during mitosis. Ubiquitous.

It is found in the cytoplasm. Its subcellular location is the nucleus. It localises to the cytoskeleton. The protein localises to the spindle. Putative transcription factor, weakly pro-apoptotic when overexpressed. Tumor suppressor. Required for early embryonic stem cell development. Functionally, displaces isoform 4 at the onset of differentiation, required for repression of stemness genes. This is Death-inducer obliterator 1 (DIDO1) from Homo sapiens (Human).